The following is a 226-amino-acid chain: Lipoprotein-releasing system ATP-binding protein LolD (226 aa).

In terms of domain architecture, ABC transporter spans 5-225 (FALSNISKFF…EINSCMLSSV (221 aa)). 40–47 (GRSGSGKS) lines the ATP pocket.

Belongs to the ABC transporter superfamily. Lipoprotein translocase (TC 3.A.1.125) family. As to quaternary structure, the complex is composed of two ATP-binding proteins (LolD) and two transmembrane proteins (LolC and LolE).

It localises to the cell inner membrane. In terms of biological role, part of the ABC transporter complex LolCDE involved in the translocation of mature outer membrane-directed lipoproteins, from the inner membrane to the periplasmic chaperone, LolA. Responsible for the formation of the LolA-lipoprotein complex in an ATP-dependent manner. The sequence is that of Lipoprotein-releasing system ATP-binding protein LolD from Ehrlichia canis (strain Jake).